A 540-amino-acid chain; its full sequence is MASQEFEVEAIVDKRQDKNGNTQYLVRWKGYDKQDDTWEPEQHLMNCEKCVHDFNRRQTEKQKKLTWTTTSRIFSNNARRRTSRSTKANYSKNSPKTPVTDKHHRSKNRKLFAASKNVRRKAASILSDTKNMEIINSTIETLAPDSPFDHKTVSGFQKLEKLDPIAADQQDTVVFKVTEGKLLRDPLSRPGAEQTGIQNKTQIHPLMSQMSGSVTASMATGSATRKGIVVLIDPLAANGTTDMHTSVPRVKGGQRNITDDSRDQPFIKKMHFTIRLTESASTYRDIVVKKEDGFTQIVLSTRSTEKNALNTEVIKEIVNALNSAAADDSKLVLFSAAGSVFCCGLDFGYFVKHLRNNRNTASLEMVDTIKNFVNTFIQFKKPIVVSVNGPAIGLGASILPLCDLVWANEKAWFQTPYTTFGQSPDGCSSITFPKMMGKASANEMLIAGRKLTAREACAKGLVSQVFLTGTFTQEVMIQIKELASYNPIVLEECKALVRCNIKLELEQANERECEVLRKIWSSAQGIESMLKYVENKIDEF.

In terms of domain architecture, Chromo spans 6–66 (FEVEAIVDKR…RQTEKQKKLT (61 aa)). The disordered stretch occupies residues 76 to 106 (NNARRRTSRSTKANYSKNSPKTPVTDKHHRS). Polar residues predominate over residues 87–97 (KANYSKNSPKT).

As to quaternary structure, interacts (via chromo domain) with histone H3K9me3. As to expression, testis-specific. Detected in spermatids (at protein level).

The protein resides in the nucleus. It catalyses the reaction L-lysyl-[protein] + acetyl-CoA = N(6)-acetyl-L-lysyl-[protein] + CoA + H(+). Its function is as follows. Has histone acetyltransferase activity, with a preference for histone H4. This chain is Testis-specific chromodomain protein Y 1 (CDY1), found in Homo sapiens (Human).